An 86-amino-acid chain; its full sequence is Small ribosomal subunit protein bS20 (86 aa).

Residues 1-26 (MANIKSAKKRAITSEKRRQHNASRRS) form a disordered region.

Belongs to the bacterial ribosomal protein bS20 family.

Functionally, binds directly to 16S ribosomal RNA. The chain is Small ribosomal subunit protein bS20 from Photobacterium profundum (strain SS9).